The primary structure comprises 420 residues: ATP phosphoribosyltransferase regulatory subunit (420 aa).

This sequence belongs to the class-II aminoacyl-tRNA synthetase family. HisZ subfamily. As to quaternary structure, heteromultimer composed of HisG and HisZ subunits.

Its subcellular location is the cytoplasm. It functions in the pathway amino-acid biosynthesis; L-histidine biosynthesis; L-histidine from 5-phospho-alpha-D-ribose 1-diphosphate: step 1/9. Its function is as follows. Required for the first step of histidine biosynthesis. May allow the feedback regulation of ATP phosphoribosyltransferase activity by histidine. The chain is ATP phosphoribosyltransferase regulatory subunit from Synechococcus sp. (strain ATCC 27144 / PCC 6301 / SAUG 1402/1) (Anacystis nidulans).